The chain runs to 422 residues: Light-independent protochlorophyllide reductase subunit N (422 aa).

[4Fe-4S] cluster contacts are provided by Cys-26, Cys-51, and Cys-112.

This sequence belongs to the BchN/ChlN family. In terms of assembly, protochlorophyllide reductase is composed of three subunits; BchL, BchN and BchB. Forms a heterotetramer of two BchB and two BchN subunits. Requires [4Fe-4S] cluster as cofactor.

It carries out the reaction chlorophyllide a + oxidized 2[4Fe-4S]-[ferredoxin] + 2 ADP + 2 phosphate = protochlorophyllide a + reduced 2[4Fe-4S]-[ferredoxin] + 2 ATP + 2 H2O. The protein operates within porphyrin-containing compound metabolism; bacteriochlorophyll biosynthesis (light-independent). In terms of biological role, component of the dark-operative protochlorophyllide reductase (DPOR) that uses Mg-ATP and reduced ferredoxin to reduce ring D of protochlorophyllide (Pchlide) to form chlorophyllide a (Chlide). This reaction is light-independent. The NB-protein (BchN-BchB) is the catalytic component of the complex. The protein is Light-independent protochlorophyllide reductase subunit N of Acidiphilium rubrum.